The primary structure comprises 43 residues: Protein PsbN (43 aa).

A helical membrane pass occupies residues 4–24; sequence GILVVIFISCLLVSFTGYTIY.

This sequence belongs to the PsbN family.

Its subcellular location is the plastid. It localises to the chloroplast thylakoid membrane. In terms of biological role, may play a role in photosystem I and II biogenesis. This chain is Protein PsbN, found in Chaetosphaeridium globosum (Charophycean green alga).